Reading from the N-terminus, the 90-residue chain is DNA-directed RNA polymerase subunit omega (90 aa).

Belongs to the RNA polymerase subunit omega family. The RNAP catalytic core consists of 2 alpha, 1 beta, 1 beta' and 1 omega subunit. When a sigma factor is associated with the core the holoenzyme is formed, which can initiate transcription.

It carries out the reaction RNA(n) + a ribonucleoside 5'-triphosphate = RNA(n+1) + diphosphate. In terms of biological role, promotes RNA polymerase assembly. Latches the N- and C-terminal regions of the beta' subunit thereby facilitating its interaction with the beta and alpha subunits. The protein is DNA-directed RNA polymerase subunit omega of Beutenbergia cavernae (strain ATCC BAA-8 / DSM 12333 / CCUG 43141 / JCM 11478 / NBRC 16432 / NCIMB 13614 / HKI 0122).